Consider the following 467-residue polypeptide: Glutamate--tRNA ligase 2 (467 aa).

The 'HIGH' region signature appears at 18–28 (PSPTGYLHVGG). The short motif at 238–242 (PLSKR) is the 'KMSKS' region element. Lys-241 provides a ligand contact to ATP.

This sequence belongs to the class-I aminoacyl-tRNA synthetase family. Glutamate--tRNA ligase type 1 subfamily. As to quaternary structure, monomer.

It localises to the cytoplasm. It catalyses the reaction tRNA(Glu) + L-glutamate + ATP = L-glutamyl-tRNA(Glu) + AMP + diphosphate. Its function is as follows. Catalyzes the attachment of glutamate to tRNA(Glu) in a two-step reaction: glutamate is first activated by ATP to form Glu-AMP and then transferred to the acceptor end of tRNA(Glu). The polypeptide is Glutamate--tRNA ligase 2 (Fervidobacterium nodosum (strain ATCC 35602 / DSM 5306 / Rt17-B1)).